We begin with the raw amino-acid sequence, 364 residues long: Aminomethyltransferase (364 aa).

The protein belongs to the GcvT family. As to quaternary structure, the glycine cleavage system is composed of four proteins: P, T, L and H.

It catalyses the reaction N(6)-[(R)-S(8)-aminomethyldihydrolipoyl]-L-lysyl-[protein] + (6S)-5,6,7,8-tetrahydrofolate = N(6)-[(R)-dihydrolipoyl]-L-lysyl-[protein] + (6R)-5,10-methylene-5,6,7,8-tetrahydrofolate + NH4(+). Its function is as follows. The glycine cleavage system catalyzes the degradation of glycine. The sequence is that of Aminomethyltransferase from Shewanella putrefaciens (strain CN-32 / ATCC BAA-453).